A 452-amino-acid chain; its full sequence is tRNA-2-methylthio-N(6)-dimethylallyladenosine synthase (452 aa).

The region spanning 16-134 (KRFFISTWGC…LPEYIERVKT (119 aa)) is the MTTase N-terminal domain. [4Fe-4S] cluster-binding residues include cysteine 25, cysteine 61, cysteine 95, cysteine 171, cysteine 175, and cysteine 178. One can recognise a Radical SAM core domain in the interval 157–387 (RKSDIKAFVT…VEAVNEIMAR (231 aa)). Residues 390-452 (KEFEGKTVEV…NSFSLTGEII (63 aa)) form the TRAM domain.

It belongs to the methylthiotransferase family. MiaB subfamily. In terms of assembly, monomer. [4Fe-4S] cluster is required as a cofactor.

The protein localises to the cytoplasm. The catalysed reaction is N(6)-dimethylallyladenosine(37) in tRNA + (sulfur carrier)-SH + AH2 + 2 S-adenosyl-L-methionine = 2-methylsulfanyl-N(6)-dimethylallyladenosine(37) in tRNA + (sulfur carrier)-H + 5'-deoxyadenosine + L-methionine + A + S-adenosyl-L-homocysteine + 2 H(+). Catalyzes the methylthiolation of N6-(dimethylallyl)adenosine (i(6)A), leading to the formation of 2-methylthio-N6-(dimethylallyl)adenosine (ms(2)i(6)A) at position 37 in tRNAs that read codons beginning with uridine. In Clostridium novyi (strain NT), this protein is tRNA-2-methylthio-N(6)-dimethylallyladenosine synthase.